The primary structure comprises 67 residues: Cold shock protein ScoF (67 aa).

The CSD domain maps to 4-64 (GTVKWFNSEK…GQKGPQAENI (61 aa)).

The protein localises to the cytoplasm. This Streptomyces coelicolor (strain ATCC BAA-471 / A3(2) / M145) protein is Cold shock protein ScoF (scoF).